The chain runs to 172 residues: Keratin-associated protein 13-1 (172 aa).

A run of 5 repeats spans residues 46–55, 56–65, 66–75, 76–85, and 92–101. The segment at 46–101 is 5 X 10 AA approximate repeats; sequence CQLGSSLYRGCQQTCWEPTSCQTSYVESSPCQTSCYRPRTSLLCSPCQTTYSGSLG.

It belongs to the PMG family. Interacts with hair keratins. As to expression, weak expression seen in the late matrix and entire cortex area of the hair follicle.

Functionally, in the hair cortex, hair keratin intermediate filaments are embedded in an interfilamentous matrix, consisting of hair keratin-associated proteins (KRTAP), which are essential for the formation of a rigid and resistant hair shaft through their extensive disulfide bond cross-linking with abundant cysteine residues of hair keratins. The matrix proteins include the high-sulfur and high-glycine-tyrosine keratins. The polypeptide is Keratin-associated protein 13-1 (KRTAP13-1) (Homo sapiens (Human)).